The following is a 211-amino-acid chain: dITP/XTP pyrophosphatase (211 aa).

A substrate-binding site is contributed by 13–18; it reads THNPGK. Asp-45 and Asp-74 together coordinate Mg(2+). Asp-74 acts as the Proton acceptor in catalysis. Substrate-binding positions include Ser-75, 160-163, Lys-183, and 195-196; these read FGYD and HR.

The protein belongs to the HAM1 NTPase family. As to quaternary structure, homodimer. Mg(2+) serves as cofactor.

It carries out the reaction XTP + H2O = XMP + diphosphate + H(+). The catalysed reaction is dITP + H2O = dIMP + diphosphate + H(+). The enzyme catalyses ITP + H2O = IMP + diphosphate + H(+). Functionally, pyrophosphatase that catalyzes the hydrolysis of nucleoside triphosphates to their monophosphate derivatives, with a high preference for the non-canonical purine nucleotides XTP (xanthosine triphosphate), dITP (deoxyinosine triphosphate) and ITP. Seems to function as a house-cleaning enzyme that removes non-canonical purine nucleotides from the nucleotide pool, thus preventing their incorporation into DNA/RNA and avoiding chromosomal lesions. This Bradyrhizobium diazoefficiens (strain JCM 10833 / BCRC 13528 / IAM 13628 / NBRC 14792 / USDA 110) protein is dITP/XTP pyrophosphatase.